The following is a 668-amino-acid chain: METSSFENAPPAAINDAQDNNINTETNDQETNQQSIETRDAIDKENGVQTETGENSAKNAEQNVSSTNLNNAPTNGALDDDVIPNAIVIKNIPFAIKKEQLLDIIEEMDLPLPYAFNYHFDNGIFRGLAFANFTTPEETTQVITSLNGKEISGRKLKVEYKKMLPQAERERIEREKREKRGQLEEQHRSSSNLSLDSLSKMSGSGNNNTSNNQLFSTLMNGINANSMMNSPMNNTINNNSSNNNNSGNIILNQPSLSAQHTSSSLYQTNVNNQAQMSTERFYAPLPSTSTLPLPPQQLDFNDPDTLEIYSQLLLFKDREKYYYELAYPMGISASHKRIINVLCSYLGLVEVYDPRFIIIRRKILDHANLQSHLQQQGQMTSAHPLQPNSTGGSMNRSQSYTSLLQAHAAAAANSISNQAVNNSSNSNTINSNNGNGNNVIINNNSASSTPKISSQGQFSMQPTLTSPKMNIHHSSQYNSADQPQQPQPQTQQNVQSAAQQQQSFLRQQATLTPSSRIPSGYSANHYQINSVNPLLRNSQISPPNSQIPINSQTLSQAQPPAQSQTQQRVPVAYQNASLSSQQLYNLNGPSSANSQSQLLPQHTNGSVHSNFSYQSYHDESMLSAHNLNSADLIYKSLSHSGLDDGLEQGLNRSLSGLDLQNQNKKNLW.

Positions 1-77 (METSSFENAP…NLNNAPTNGA (77 aa)) are disordered. Low complexity predominate over residues 8–23 (NAPPAAINDAQDNNIN). A compositionally biased stretch (polar residues) spans 24–36 (TETNDQETNQQSI). Over residues 37–46 (ETRDAIDKEN) the composition is skewed to basic and acidic residues. The span at 47–74 (GVQTETGENSAKNAEQNVSSTNLNNAPT) shows a compositional bias: polar residues. At S56 the chain carries Phosphoserine. The 79-residue stretch at 85-163 (NAIVIKNIPF…RKLKVEYKKM (79 aa)) folds into the RRM domain. The span at 168-188 (ERERIEREKREKRGQLEEQHR) shows a compositional bias: basic and acidic residues. Positions 168–214 (ERERIEREKREKRGQLEEQHRSSSNLSLDSLSKMSGSGNNNTSNNQL) are disordered. Phosphoserine is present on residues S189, S191, S194, and S197. Over residues 189 to 212 (SSSNLSLDSLSKMSGSGNNNTSNN) the composition is skewed to low complexity. T305 is modified (phosphothreonine). Disordered regions lie at residues 374–398 (QQQG…NRSQ) and 420–570 (VNNS…QRVP). S393 is subject to Phosphoserine. Positions 420 to 449 (VNNSSNSNTINSNNGNGNNVIINNNSASST) are enriched in low complexity. Residues 450 to 478 (PKISSQGQFSMQPTLTSPKMNIHHSSQYN) are compositionally biased toward polar residues. S466 bears the Phosphoserine mark. Residues 479-508 (SADQPQQPQPQTQQNVQSAAQQQQSFLRQQ) show a composition bias toward low complexity. A compositionally biased stretch (polar residues) spans 509-551 (ATLTPSSRIPSGYSANHYQINSVNPLLRNSQISPPNSQIPINS). Phosphoserine is present on S541. Residues 552–567 (QTLSQAQPPAQSQTQQ) show a composition bias toward low complexity. 5 positions are modified to phosphoserine: S636, S638, S640, S653, and S655.

As to quaternary structure, interacts with RAD53. In terms of processing, hyperphosphorylated in response to DNA damage by MEC1.

The protein localises to the cytoplasm. In terms of biological role, involved in normal G2/M phase transition of the mitotic cell cycle. In association with RAD53, also involved in checkpoint control in response to DNA damage. The polypeptide is RNA-binding protein PIN4 (PIN4) (Saccharomyces cerevisiae (strain ATCC 204508 / S288c) (Baker's yeast)).